The following is a 72-amino-acid chain: Translation initiation factor IF-1 (72 aa).

One can recognise an S1-like domain in the interval 1-72 (MAKEEVLEFP…TKGRITYRFK (72 aa)).

This sequence belongs to the IF-1 family. As to quaternary structure, component of the 30S ribosomal translation pre-initiation complex which assembles on the 30S ribosome in the order IF-2 and IF-3, IF-1 and N-formylmethionyl-tRNA(fMet); mRNA recruitment can occur at any time during PIC assembly.

It is found in the cytoplasm. In terms of biological role, one of the essential components for the initiation of protein synthesis. Stabilizes the binding of IF-2 and IF-3 on the 30S subunit to which N-formylmethionyl-tRNA(fMet) subsequently binds. Helps modulate mRNA selection, yielding the 30S pre-initiation complex (PIC). Upon addition of the 50S ribosomal subunit IF-1, IF-2 and IF-3 are released leaving the mature 70S translation initiation complex. This Brucella abortus (strain 2308) protein is Translation initiation factor IF-1.